The primary structure comprises 388 residues: Trichodiene synthase (388 aa).

Asp-109, Glu-173, Asn-234, Ser-238, Glu-242, and Asp-248 together coordinate Mg(2+). Positions 109-113 (DDSRE) are aspartate-rich domain.

It belongs to the trichodiene synthase family. It depends on Mg(2+) as a cofactor. Mn(2+) serves as cofactor.

It carries out the reaction (2E,6E)-farnesyl diphosphate = trichodiene + diphosphate. It functions in the pathway sesquiterpene biosynthesis; trichothecene biosynthesis. Trichodiene synthase; part of the gene cluster that mediates the production of the antimicrobial trichothecene harzianum A (HA) that plays a role in Botrytis cinerea antagonistic activity and plant defense priming. The biosynthesis of harzianum A begins with the cyclization of farnesyl diphosphate to trichodiene and is catalyzed by the trichodiene synthase TRI5. Trichodiene undergoes a series of oxygenations catalyzed by the cytochrome P450 monooxygenase TRI4. TRI4 controls the addition of 3 oxygens at C-2, C-11, and the C-12, C-13-epoxide to form the intermediate isotrichodiol. Isotrichodiol then undergoes a non-enzymatic isomerization and cyclization to form 12,13-epoxytrichothec-9-ene (EPT) which is further converted to trichodermol by the cytochrome P450 monooxygenase TRI11 via C-4 hydroxylation. The last step of HA synthesis is esterification of an octatriendioyl moiety to the C-4 oxygen of trichodermol. The octatriendioyl moiety is probably produced by the polyketide synthase TRI17 and the esterification performed by the trichothecene O-acetyltransferase TRI3. This is Trichodiene synthase from Trichoderma arundinaceum.